Reading from the N-terminus, the 505-residue chain is Trans-cinnamate 4-monooxygenase C4H2 (505 aa).

2 short sequence motifs (nuclear localization signal) span residues 161-168 and 247-254; these read VKKMKESN and EKRLKLFK. Cys-447 serves as a coordination point for heme.

The protein belongs to the cytochrome P450 family. Heme is required as a cofactor.

It localises to the nucleus. It carries out the reaction (E)-cinnamate + reduced [NADPH--hemoprotein reductase] + O2 = (E)-4-coumarate + oxidized [NADPH--hemoprotein reductase] + H2O + H(+). The protein operates within phenylpropanoid metabolism; trans-4-coumarate biosynthesis; trans-4-coumarate from trans-cinnamate: step 1/1. Its function is as follows. Component of the floral volatile benzenoid/phenylpropanoid (FVBP) biosynthetic pathway that controls carbon flux to pigments essential for pollination or UV protection, to numerous pytoalexins synthesized by plants when challenged by pathogens, and to lignins. The protein is Trans-cinnamate 4-monooxygenase C4H2 of Petunia hybrida (Petunia).